The chain runs to 218 residues: Ribose-5-phosphate isomerase A (218 aa).

Substrate contacts are provided by residues 28-31 (TGST), 81-84 (DGAD), and 94-97 (KGGG). The active-site Proton acceptor is E103. K121 contacts substrate.

It belongs to the ribose 5-phosphate isomerase family. In terms of assembly, homodimer.

It carries out the reaction aldehydo-D-ribose 5-phosphate = D-ribulose 5-phosphate. Its pathway is carbohydrate degradation; pentose phosphate pathway; D-ribose 5-phosphate from D-ribulose 5-phosphate (non-oxidative stage): step 1/1. In terms of biological role, catalyzes the reversible conversion of ribose-5-phosphate to ribulose 5-phosphate. The polypeptide is Ribose-5-phosphate isomerase A (Shewanella sediminis (strain HAW-EB3)).